Reading from the N-terminus, the 466-residue chain is Cysteine--tRNA ligase (466 aa).

Cysteine 33 lines the Zn(2+) pocket. A 'HIGH' region motif is present at residues 35-45 (PTVYDFAHIGN). Zn(2+)-binding residues include cysteine 221, histidine 246, and glutamate 250. The 'KMSKS' region signature appears at 279–283 (KMSKS). Residue lysine 282 participates in ATP binding.

This sequence belongs to the class-I aminoacyl-tRNA synthetase family. In terms of assembly, monomer. Requires Zn(2+) as cofactor.

It is found in the cytoplasm. It carries out the reaction tRNA(Cys) + L-cysteine + ATP = L-cysteinyl-tRNA(Cys) + AMP + diphosphate. In Sinorhizobium medicae (strain WSM419) (Ensifer medicae), this protein is Cysteine--tRNA ligase.